Reading from the N-terminus, the 492-residue chain is MLLLGLLLLTALAGARLLWNKWKYRSLHLPPLAPGFLHLLQPDLPIYLLGLTQKLGPVYRLRLGLQDVVVLNSKRTIEEALIRRWVDFAGRPQMPSYKLVSQHYQDLSLGDYSLLWKAHKKLTRSALLLGIRNSMEPLVEQLTQEFCERMRAQAGTPVAIQKEFSFLTCSVICCLTFGDKEDTLVHAFHDCVEDLMKSWEHWSIQVLDIVPFLRFFPNPGLRRLKQALENRDRIVEKQLRQHKDSMVAGQWRDMTDYMLQGMGKPKVEKGHGRLLEGHVHMSVVDLFIGGTETTATTLSWAVAFLLHHPEIQQRLQEELDCELGPGASGSRVPLKDPSRLPLLTATIAEVLRLRPVVPLALPHRTTRHSSILGYDIPEGTVVIPNLQGAHLDDTVWEQPHEFRPDRFLVPGASPRVLAFGCGARVCLGEPLARLELFVVLARLLHAFTLLPPTGPLPSLRPRSHCGINLTMQPFQVRLQPRGAVAPGPSQHQ.

Residues Arg91 and Lys120 each coordinate heme b. Arg231 serves as a coordination point for 17alpha-hydroxyprogesterone. A progesterone-binding site is contributed by Arg231. His363, Arg424, and Cys426 together coordinate heme b.

The protein belongs to the cytochrome P450 family. Heme b serves as cofactor.

The protein localises to the endoplasmic reticulum membrane. The protein resides in the microsome membrane. The catalysed reaction is 17alpha-hydroxyprogesterone + reduced [NADPH--hemoprotein reductase] + O2 = 11-deoxycortisol + oxidized [NADPH--hemoprotein reductase] + H2O + H(+). It carries out the reaction progesterone + reduced [NADPH--hemoprotein reductase] + O2 = 21-hydroxyprogesterone + oxidized [NADPH--hemoprotein reductase] + H2O + H(+). Specifically catalyzes the 21-hydroxylation of steroids. Required for the adrenal synthesis of mineralocorticoids and glucocorticoids. This Felis catus (Cat) protein is Steroid 21-hydroxylase (CYP21).